The sequence spans 195 residues: Transmembrane protein 239 (195 aa).

A run of 2 helical transmembrane segments spans residues 105–125 and 145–171; these read LWGLEGILYLLLALMLCHALF and HLLPALLLLVLSALPALLFTASFLLLF.

The protein localises to the membrane. The polypeptide is Transmembrane protein 239 (TMEM239) (Homo sapiens (Human)).